Reading from the N-terminus, the 139-residue chain is MRHGIAGRKFNRTTSHRLAMFSNMANALIKHEQIKTTLPKAKDLRPIVERLITLGKKGGLANKRLAYAELRDHDMVEKLFTTLAERYKGRPGGYTRVLKAGFRYGDAAPMGVIELVDRDPEAKGQDSGPVEIKDESEEG.

Residues 117–139 are disordered; that stretch reads DRDPEAKGQDSGPVEIKDESEEG.

It belongs to the bacterial ribosomal protein bL17 family. In terms of assembly, part of the 50S ribosomal subunit. Contacts protein L32.

This is Large ribosomal subunit protein bL17 from Rhodospirillum centenum (strain ATCC 51521 / SW).